Consider the following 595-residue polypeptide: Polyadenylate-binding protein-interacting protein 4 (595 aa).

Residues 48-113 enclose the Sm domain; sequence RLVYFTTCKI…SRSEFVRKPP (66 aa). 2 stretches are compositionally biased toward polar residues: residues 302-313 and 326-346; these read GGSSTSDGQKPA and GDSQSSRKNKNVDQSCSTSKQ. Disordered stretches follow at residues 302 to 505 and 536 to 595; these read GGSS…FYYP and MYHP…KGRE. Residues 364-382 show a composition bias toward basic and acidic residues; it reads DEQRRKNNEEVSHNNRSAE. The segment covering 416–465 has biased composition (low complexity); it reads SQVSSKTKSESSFGQSASRSSESRPGPSTSSRPGLSPSSSIGSMASSEKS. Residues 466 to 474 carry the PAM2-like 1; degenerate motif; it reads TLNPNAKEF. The PAM2-like 2 signature appears at 475–485; that stretch reads KLNPKAKSFKP. Low complexity-rich tracts occupy residues 488 to 501 and 548 to 570; these read SAAAPPQSPIADAS and QPQYPQQQMIPGQQQQQMIPGQQ.

In terms of tissue distribution, expressed in cauline leaves, stems, rosette leaves, immature siliques and primary inflorescences.

This Arabidopsis thaliana (Mouse-ear cress) protein is Polyadenylate-binding protein-interacting protein 4 (CID4).